A 384-amino-acid polypeptide reads, in one-letter code: Putative glutamate--cysteine ligase 2 (384 aa).

It belongs to the glutamate--cysteine ligase type 2 family. YbdK subfamily.

It catalyses the reaction L-cysteine + L-glutamate + ATP = gamma-L-glutamyl-L-cysteine + ADP + phosphate + H(+). Its function is as follows. ATP-dependent carboxylate-amine ligase which exhibits weak glutamate--cysteine ligase activity. This Dechloromonas aromatica (strain RCB) protein is Putative glutamate--cysteine ligase 2.